Reading from the N-terminus, the 204-residue chain is LexA repressor (204 aa).

A DNA-binding region (H-T-H motif) is located at residues 30–50; sequence IREICQGVGLSSPSTVHHHLK. Catalysis depends on for autocatalytic cleavage activity residues Ser125 and Lys162.

Belongs to the peptidase S24 family. As to quaternary structure, homodimer.

The enzyme catalyses Hydrolysis of Ala-|-Gly bond in repressor LexA.. In terms of biological role, represses a number of genes involved in the response to DNA damage (SOS response), including recA and lexA. In the presence of single-stranded DNA, RecA interacts with LexA causing an autocatalytic cleavage which disrupts the DNA-binding part of LexA, leading to derepression of the SOS regulon and eventually DNA repair. This chain is LexA repressor, found in Carboxydothermus hydrogenoformans (strain ATCC BAA-161 / DSM 6008 / Z-2901).